Here is a 748-residue protein sequence, read N- to C-terminus: NAD(P)H-quinone oxidoreductase subunit 5, chloroplastic (748 aa).

Helical transmembrane passes span 9–29, 40–60, 89–109, 121–140, 147–167, 185–205, 224–244, 258–278, 280–300, 327–347, 354–374, 396–416, 425–445, 551–571, 605–625, and 726–746; these read WIIP…LLLV, WAFP…DLSI, IDPL…MVLV, YLRF…GLVT, IYIF…FWFT, GDFG…SFEF, LFVT…SAQF, TPIS…FLVA, LFPL…IGII, LGYT…FHLI, ALLF…VGYS, TAFL…CFWS, WLYS…TAFY, LLPL…GIPF, FITN…IASL, and YLFL…FLFL.

It belongs to the complex I subunit 5 family. NDH is composed of at least 16 different subunits, 5 of which are encoded in the nucleus.

It localises to the plastid. Its subcellular location is the chloroplast thylakoid membrane. The catalysed reaction is a plastoquinone + NADH + (n+1) H(+)(in) = a plastoquinol + NAD(+) + n H(+)(out). The enzyme catalyses a plastoquinone + NADPH + (n+1) H(+)(in) = a plastoquinol + NADP(+) + n H(+)(out). NDH shuttles electrons from NAD(P)H:plastoquinone, via FMN and iron-sulfur (Fe-S) centers, to quinones in the photosynthetic chain and possibly in a chloroplast respiratory chain. The immediate electron acceptor for the enzyme in this species is believed to be plastoquinone. Couples the redox reaction to proton translocation, and thus conserves the redox energy in a proton gradient. The sequence is that of NAD(P)H-quinone oxidoreductase subunit 5, chloroplastic (ndhF) from Platanus occidentalis (Sycamore).